The sequence spans 284 residues: Bifunctional protein FolD (284 aa).

Residues 165 to 167 (GRS), S190, and V231 each bind NADP(+).

Belongs to the tetrahydrofolate dehydrogenase/cyclohydrolase family. In terms of assembly, homodimer.

It carries out the reaction (6R)-5,10-methylene-5,6,7,8-tetrahydrofolate + NADP(+) = (6R)-5,10-methenyltetrahydrofolate + NADPH. It catalyses the reaction (6R)-5,10-methenyltetrahydrofolate + H2O = (6R)-10-formyltetrahydrofolate + H(+). Its pathway is one-carbon metabolism; tetrahydrofolate interconversion. Its function is as follows. Catalyzes the oxidation of 5,10-methylenetetrahydrofolate to 5,10-methenyltetrahydrofolate and then the hydrolysis of 5,10-methenyltetrahydrofolate to 10-formyltetrahydrofolate. In Geobacillus kaustophilus (strain HTA426), this protein is Bifunctional protein FolD.